We begin with the raw amino-acid sequence, 115 residues long: Large ribosomal subunit protein bL20 (115 aa).

This sequence belongs to the bacterial ribosomal protein bL20 family.

Binds directly to 23S ribosomal RNA and is necessary for the in vitro assembly process of the 50S ribosomal subunit. It is not involved in the protein synthesizing functions of that subunit. This is Large ribosomal subunit protein bL20 from Chlorobium phaeovibrioides (strain DSM 265 / 1930) (Prosthecochloris vibrioformis (strain DSM 265)).